A 367-amino-acid polypeptide reads, in one-letter code: UDP-N-acetylglucosamine--N-acetylmuramyl-(pentapeptide) pyrophosphoryl-undecaprenol N-acetylglucosamine transferase (367 aa).

UDP-N-acetyl-alpha-D-glucosamine is bound by residues 15 to 17 (TGG), asparagine 126, arginine 169, serine 197, and glutamine 298.

The protein belongs to the glycosyltransferase 28 family. MurG subfamily.

Its subcellular location is the cell inner membrane. The catalysed reaction is di-trans,octa-cis-undecaprenyl diphospho-N-acetyl-alpha-D-muramoyl-L-alanyl-D-glutamyl-meso-2,6-diaminopimeloyl-D-alanyl-D-alanine + UDP-N-acetyl-alpha-D-glucosamine = di-trans,octa-cis-undecaprenyl diphospho-[N-acetyl-alpha-D-glucosaminyl-(1-&gt;4)]-N-acetyl-alpha-D-muramoyl-L-alanyl-D-glutamyl-meso-2,6-diaminopimeloyl-D-alanyl-D-alanine + UDP + H(+). The protein operates within cell wall biogenesis; peptidoglycan biosynthesis. Functionally, cell wall formation. Catalyzes the transfer of a GlcNAc subunit on undecaprenyl-pyrophosphoryl-MurNAc-pentapeptide (lipid intermediate I) to form undecaprenyl-pyrophosphoryl-MurNAc-(pentapeptide)GlcNAc (lipid intermediate II). This is UDP-N-acetylglucosamine--N-acetylmuramyl-(pentapeptide) pyrophosphoryl-undecaprenol N-acetylglucosamine transferase from Bradyrhizobium sp. (strain ORS 278).